Here is a 511-residue protein sequence, read N- to C-terminus: Glucose-1-phosphate adenylyltransferase large subunit 1, chloroplastic/amyloplastic (511 aa).

The N-terminal 58 residues, 1-58 (MAAMDLRVAAPASVAAAARCGTSLARPWPARAVGGGGGGGGRGRRLSVRTSVATTEAA), are a transit peptide targeting the chloroplast.

The protein belongs to the bacterial/plant glucose-1-phosphate adenylyltransferase family. Heterotetramer composed of two small and two large subunits. Expressed in leaves and stems.

The protein localises to the plastid. Its subcellular location is the chloroplast. It is found in the amyloplast. The catalysed reaction is alpha-D-glucose 1-phosphate + ATP + H(+) = ADP-alpha-D-glucose + diphosphate. The protein operates within glycan biosynthesis; starch biosynthesis. With respect to regulation, activated by 3'phosphoglycerate, inhibited by orthophosphate. Allosteric regulation. Functionally, involved in synthesis of starch. Catalyzes the synthesis of ADP-glucose, a molecule that serves as an activated glycosyl donor for alpha-1,4-glucan synthesis. Essential for starch synthesis in leaf chloroplasts and endosperm amyloplasts. This chain is Glucose-1-phosphate adenylyltransferase large subunit 1, chloroplastic/amyloplastic, found in Oryza sativa subsp. japonica (Rice).